The primary structure comprises 281 residues: Transformer-2 protein homolog alpha (281 aa).

The segment at 1–116 is disordered; sequence MSDVEENNFE…TGSRANPDPN (116 aa). S2 is modified (N-acetylserine). A phosphoserine mark is found at S2 and S14. Residue T24 is modified to Phosphothreonine. Residues 51-82 are compositionally biased toward basic residues; sequence RSRSKSRSRSRRHSHRRYTRSRSHSHRRRSRS. A phosphoserine mark is found at S80, S82, and S84. T86 is subject to Phosphothreonine. The segment covering 90–108 has biased composition (basic residues); the sequence is RRRRSRSHSPMSNRRRHTG. S94 and S96 each carry phosphoserine. An RRM domain is found at 117–195; the sequence is TCLGVFGLSL…RRIRVDYSIT (79 aa). A Glycyl lysine isopeptide (Lys-Gly) (interchain with G-Cter in SUMO2) cross-link involves residue K196. The linker stretch occupies residues 196–223; that stretch reads KRAHTPTPGIYMGRPTHSGGGGGGGGGG. Positions 199-281 are disordered; it reads HTPTPGIYMG…RSRSYSPRRY (83 aa). A phosphothreonine mark is found at T200 and T202. Gly residues predominate over residues 213–231; it reads SGGGGGGGGGGGGGGGGGG. R233 is subject to Omega-N-methylarginine. Residues 233 to 257 show a composition bias toward basic and acidic residues; that stretch reads RRRDSYYDRGYDRGYDRYEDYDYRR. Position 237 is a phosphoserine (S237). Basic residues predominate over residues 267–281; that stretch reads YRSRSRSRSYSPRRY.

This sequence belongs to the splicing factor SR family. In terms of assembly, binds to A3 enhancer proteins SRp75, SRp55, SRp40 and SRp30. Interacts with ILDR1 (via C-terminus) and ILDR2. Post-translationally, phosphorylated in the RS domains. As to expression, expressed in inner ear.

The protein localises to the nucleus. In terms of biological role, sequence-specific RNA-binding protein which participates in the control of pre-mRNA splicing. This Mus musculus (Mouse) protein is Transformer-2 protein homolog alpha.